Here is a 412-residue protein sequence, read N- to C-terminus: GATOR complex protein NPRL2 (412 aa).

The protein belongs to the NPR2 family. Component of the GATOR complex consisting of mio, Nup44A/Seh1, Im11, Nplr3, Nplr2, Wdr24, Wdr59 and Sec13. Within the GATOR complex, probable component of the GATOR1 subcomplex which is likely composed of Iml1, Nplr2 and Nplr3. Interacts with Nprl3.

It is found in the cytoplasm. It localises to the lysosome. An essential component of the GATOR subcomplex GATOR1 which functions as an inhibitor of the amino acid-sensing branch of the TORC1 signaling pathway. The two GATOR subcomplexes, GATOR1 and GATOR2, regulate the TORC1 pathway in order to mediate metabolic homeostasis, female gametogenesis and the response to amino acid limitation and complete starvation. The function of GATOR1 in negatively regulating the TORC1 pathway is essential for maintaining baseline levels of TORC1 activity under nutrient rich conditions, and for promoting survival during amino acid or complete starvation by inhibiting TORC1-dependent cell growth and promoting catabolic metabolism and autophagy. In addition, this inhibition of TORC1 is necessary to maintain female fertility under normal conditions and during periods of nutrient stress. GATOR1 and GATOR2 act at different stages of oogenesis to regulate TORC1 in order to control meiotic entry and promote oocyte growth and development. After exactly four mitotic cyst divisions, the GATOR1 complex members (Iml1, Nprl2 and Nprl3) down-regulate TORC1 to slow cellular metabolism and promote the mitotic/meiotic transition. At later stages of oogenesis, the mio and Nup44A components of the GATOR2 complex inhibit GATOR1 and thus activate TORC1 to promote meiotic progression, and drive oocyte growth and development. This is GATOR complex protein NPRL2 from Drosophila melanogaster (Fruit fly).